The sequence spans 129 residues: ATP synthase epsilon chain (129 aa).

It belongs to the ATPase epsilon chain family. F-type ATPases have 2 components, CF(1) - the catalytic core - and CF(0) - the membrane proton channel. CF(1) has five subunits: alpha(3), beta(3), gamma(1), delta(1), epsilon(1). CF(0) has three main subunits: a, b and c.

It is found in the cell inner membrane. Its function is as follows. Produces ATP from ADP in the presence of a proton gradient across the membrane. This chain is ATP synthase epsilon chain, found in Campylobacter jejuni subsp. doylei (strain ATCC BAA-1458 / RM4099 / 269.97).